Reading from the N-terminus, the 433-residue chain is Enolase (433 aa).

Gln-167 contacts (2R)-2-phosphoglycerate. Residue Glu-209 is the Proton donor of the active site. 3 residues coordinate Mg(2+): Asp-246, Glu-291, and Asp-318. Residues Lys-343, Arg-372, Ser-373, and Lys-394 each contribute to the (2R)-2-phosphoglycerate site. Lys-343 functions as the Proton acceptor in the catalytic mechanism.

This sequence belongs to the enolase family. Component of the RNA degradosome, a multiprotein complex involved in RNA processing and mRNA degradation. Mg(2+) serves as cofactor.

The protein resides in the cytoplasm. Its subcellular location is the secreted. The protein localises to the cell surface. It carries out the reaction (2R)-2-phosphoglycerate = phosphoenolpyruvate + H2O. It functions in the pathway carbohydrate degradation; glycolysis; pyruvate from D-glyceraldehyde 3-phosphate: step 4/5. Functionally, catalyzes the reversible conversion of 2-phosphoglycerate (2-PG) into phosphoenolpyruvate (PEP). It is essential for the degradation of carbohydrates via glycolysis. The sequence is that of Enolase from Shewanella piezotolerans (strain WP3 / JCM 13877).